An 89-amino-acid polypeptide reads, in one-letter code: Small ribosomal subunit protein uS15 (89 aa).

The protein belongs to the universal ribosomal protein uS15 family. In terms of assembly, part of the 30S ribosomal subunit. Forms a bridge to the 50S subunit in the 70S ribosome, contacting the 23S rRNA.

One of the primary rRNA binding proteins, it binds directly to 16S rRNA where it helps nucleate assembly of the platform of the 30S subunit by binding and bridging several RNA helices of the 16S rRNA. In terms of biological role, forms an intersubunit bridge (bridge B4) with the 23S rRNA of the 50S subunit in the ribosome. The polypeptide is Small ribosomal subunit protein uS15 (Mycobacterium bovis (strain ATCC BAA-935 / AF2122/97)).